Consider the following 286-residue polypeptide: Large ribosomal subunit protein uL2 (286 aa).

Disordered stretches follow at residues 22–59 and 215–286; these read KELT…GGGH and LGRR…KLHK. The span at 230-240 shows a compositional bias: basic and acidic residues; it reads DHPHGGGEGRT. Basic residues predominate over residues 255 to 286; that stretch reads KGGRTRQKRKPSNSSIVRRRKSRRYGQLKLHK.

The protein belongs to the universal ribosomal protein uL2 family. As to quaternary structure, part of the 50S ribosomal subunit. Forms a bridge to the 30S subunit in the 70S ribosome.

In terms of biological role, one of the primary rRNA binding proteins. Required for association of the 30S and 50S subunits to form the 70S ribosome, for tRNA binding and peptide bond formation. It has been suggested to have peptidyltransferase activity; this is somewhat controversial. Makes several contacts with the 16S rRNA in the 70S ribosome. The protein is Large ribosomal subunit protein uL2 of Rhodopirellula baltica (strain DSM 10527 / NCIMB 13988 / SH1).